Here is a 593-residue protein sequence, read N- to C-terminus: Serine/threonine-protein kinase PAK 4 (593 aa).

One can recognise a CRIB domain in the interval 11-24 (ISAPSNFEHRVHTG). The interval 25 to 322 (FDQHEQKFTG…VVDPGDPRSY (298 aa)) is linker. Serine 41 carries the post-translational modification Phosphoserine. The residue at position 78 (lysine 78) is an N6-methyllysine. Residues 95–303 (TRSNSLRRES…PQREPQRVSH (209 aa)) are disordered. Position 104 is a phosphoserine (serine 104). Over residues 118-133 (LEERAAPARMAPDKAG) the composition is skewed to basic and acidic residues. Residue serine 148 is modified to Phosphoserine. Residues 149-164 (GDRRRVGPEKRPKSSR) are compositionally biased toward basic and acidic residues. At serine 181 the chain carries Phosphoserine. The segment covering 184-197 (DVSTPQPGSLTSGT) has biased composition (polar residues). Threonine 187 carries the post-translational modification Phosphothreonine. Serine 195 bears the Phosphoserine mark. Threonine 207 carries the phosphothreonine modification. The segment covering 238–258 (AAPQSSSSSRPPTRARGAPSP) has biased composition (low complexity). Residues serine 257 and serine 266 each carry the phosphoserine modification. Residues 267–280 (EPQLAPPARALAAP) are compositionally biased toward low complexity. Over residues 281 to 292 (AVPPAPGPPGPR) the composition is skewed to pro residues. Serine 293 carries the post-translational modification Phosphoserine. A compositionally biased stretch (basic and acidic residues) spans 294–303 (PQREPQRVSH). One can recognise a Protein kinase domain in the interval 323-574 (LDNFIKIGEG…AAELLKHPFL (252 aa)). Residues 329 to 337 (IGEGSTGIV) and lysine 352 each bind ATP. Aspartate 442 (proton acceptor) is an active-site residue. Residue serine 476 is modified to Phosphoserine; by autocatalysis.

It belongs to the protein kinase superfamily. STE Ser/Thr protein kinase family. STE20 subfamily. In terms of assembly, interacts tightly with GTP-bound but not GDP-bound CDC42/p21 and weakly with RAC1. Interacts with FGFR2 and GRB2. Interacts with INKA1. Interacts with SH3RF2. Interacts with RHOU and PAXI; the PAK4-RHOU complex protects RHOU from ubiquitination and acts as a scaffold to suppport paxillin/PAXI phosphorylation. In terms of processing, autophosphorylated on serine residues when activated by CDC42/p21. Phosphorylated on tyrosine residues upon stimulation of FGFR2. Methylated by SETD6. Polyubiquitinated, leading to its proteasomal degradation.

It localises to the cytoplasm. It catalyses the reaction L-seryl-[protein] + ATP = O-phospho-L-seryl-[protein] + ADP + H(+). It carries out the reaction L-threonyl-[protein] + ATP = O-phospho-L-threonyl-[protein] + ADP + H(+). Its activity is regulated as follows. Inhibited by INKA1; which inhibits the serine/threonine-protein kinase activity by binding PAK4 in a substrate-like manner. Serine/threonine protein kinase that plays a role in a variety of different signaling pathways including cytoskeleton regulation, cell migration, growth, proliferation or cell survival. Activation by various effectors including growth factor receptors or active CDC42 and RAC1 results in a conformational change and a subsequent autophosphorylation on several serine and/or threonine residues. Phosphorylates and inactivates the protein phosphatase SSH1, leading to increased inhibitory phosphorylation of the actin binding/depolymerizing factor cofilin. Decreased cofilin activity may lead to stabilization of actin filaments. Phosphorylates LIMK1, a kinase that also inhibits the activity of cofilin. Phosphorylates integrin beta5/ITGB5 and thus regulates cell motility. Phosphorylates ARHGEF2 and activates the downstream target RHOA that plays a role in the regulation of assembly of focal adhesions and actin stress fibers. Stimulates cell survival by phosphorylating the BCL2 antagonist of cell death BAD. Alternatively, inhibits apoptosis by preventing caspase-8 binding to death domain receptors in a kinase independent manner. Plays a role in cell-cycle progression by controlling levels of the cell-cycle regulatory protein CDKN1A and by phosphorylating RAN. Promotes kinase-independent stabilization of RHOU, thereby contributing to focal adhesion disassembly during cell migration. This Mus musculus (Mouse) protein is Serine/threonine-protein kinase PAK 4.